The primary structure comprises 1030 residues: ATPase MORC2A (1030 aa).

Ala-2 bears the N-acetylalanine mark. ATP is bound by residues Asn-39, 87–89 (SAK), and 99–105 (QYGNGLK). Mg(2+) is bound at residue Asn-39. The stretch at 285–362 (KTRAEQEVKK…KDAKQRALKE (78 aa)) forms a coiled coil. Residue Lys-427 participates in ATP binding. The CW-type zinc-finger motif lies at 490–544 (AMEIPTTIQCDLCLKWRTLPFQLSSVETDYPDTWVCSMNPDPEQDRCEASEQKQK). Zn(2+) contacts are provided by Cys-499, Cys-502, Cys-525, and Cys-536. Residues 530–791 (DPEQDRCEAS…HPAELRKAQK (262 aa)) form a disordered region. 2 stretches are compositionally biased toward basic and acidic residues: residues 532–543 (EQDRCEASEQKQ) and 550–577 (LKKDPKTQEEKQKQLTEKIRQQQEKLEA). Residues 555–583 (KTQEEKQKQLTEKIRQQQEKLEALQKTTP) adopt a coiled-coil conformation. Thr-582 bears the Phosphothreonine mark. At Ser-614 the chain carries Phosphoserine. Over residues 629-646 (PSIQTPRPSTQLRKTSVI) the composition is skewed to polar residues. Residues Lys-650 and Lys-702 each participate in a glycyl lysine isopeptide (Lys-Gly) (interchain with G-Cter in SUMO2) cross-link. Residues 693–702 (PPLSLIPSSK) are compositionally biased toward low complexity. A Phosphoserine modification is found at Ser-703. Lys-714 is covalently cross-linked (Glycyl lysine isopeptide (Lys-Gly) (interchain with G-Cter in SUMO2)). Ser-728 carries the phosphoserine modification. At Thr-731 the chain carries Phosphothreonine. Ser-737 and Ser-741 each carry phosphoserine. A coiled-coil region spans residues 738-775 (LAVSDEEEAEEEAEKRRERCKRGKLAVKEEKKEANELS). The segment covering 763–772 (AVKEEKKEAN) has biased composition (basic and acidic residues). Lys-765 is covalently cross-linked (Glycyl lysine isopeptide (Lys-Gly) (interchain with G-Cter in SUMO2)). A phosphoserine mark is found at Ser-775 and Ser-777. Residues 779–791 (GEDHPAELRKAQK) are compositionally biased toward basic and acidic residues. Lys-817 participates in a covalent cross-link: Glycyl lysine isopeptide (Lys-Gly) (interchain with G-Cter in SUMO2). Thr-834 carries the post-translational modification Phosphothreonine. A compositionally biased stretch (basic and acidic residues) spans 837-849 (DRWVEKGSEDVRL). Disordered stretches follow at residues 837–874 (DRWVEKGSEDVRLMKPPSPEHQSPDTQQEGGEEEEAMV) and 882–901 (PEPSTSDGLPIEPDTTATSP). 2 positions are modified to phosphoserine: Ser-854 and Ser-859. Residues 856–865 (EHQSPDTQQE) show a composition bias toward polar residues. Lys-930 participates in a covalent cross-link: Glycyl lysine isopeptide (Lys-Gly) (interchain with G-Cter in SUMO2). The stretch at 966–1011 (RADSRAKASEESLRTSEKKLRETEEKLQKLRTNIVALLQKVQEDID) forms a coiled coil.

In terms of assembly, homodimerizes upon ATP-binding and dissociate upon ATP hydrolysis; homodimerization is required for gene silencing. Binds histone H3 independently of the methylation status at 'Lys-9'. Interacts with HDAC4. Interacts with FAM208A/TASOR and MPHOSPH8; the interactions associate MORC2 with the HUSH complex which recruits MORC2 to heterochromatic loci. Interacts with Morc2b. Phosphorylated by PAK1 at Ser-737 upon DNA damage. Phosphorylation is required for ATPase activity and recruitment to damaged chromatin. As to expression, expressed in the axons and Schwann cells of peripheral nerves. Expressed in testes.

The protein resides in the nucleus. It is found in the cytoplasm. It localises to the cytosol. The protein localises to the chromosome. Its subcellular location is the nucleus matrix. It catalyses the reaction ATP + H2O = ADP + phosphate + H(+). ATPase activity is dependent of phosphorylation by PAK1 and presence of DNA. Essential for epigenetic silencing by the HUSH complex. Recruited by HUSH to target site in heterochromatin, the ATPase activity and homodimerization are critical for HUSH-mediated silencing. Represses germ cell-related genes and L1 retrotransposons in collaboration with SETDB1 and the HUSH complex, the silencing is dependent of repressive epigenetic modifications, such as H3K9me3 mark. Silencing events often occur within introns of transcriptionally active genes, and lead to the down-regulation of host gene expression. During DNA damage response, regulates chromatin remodeling through ATP hydrolysis. During DNA damage response, may regulate chromatin remodeling through ATP hydrolysis. The protein is ATPase MORC2A of Mus musculus (Mouse).